Reading from the N-terminus, the 254-residue chain is Ribosomal RNA large subunit methyltransferase E (254 aa).

Residues 1 to 18 show a composition bias toward gly residues; that stretch reads MTNSGKTGGKSGKGGTGG. Residues 1 to 26 form a disordered region; the sequence is MTNSGKTGGKSGKGGTGGARALKVRV. Residues Gly89, Trp91, Asp119, Asp135, and Asp159 each coordinate S-adenosyl-L-methionine. The Proton acceptor role is filled by Lys199.

Belongs to the class I-like SAM-binding methyltransferase superfamily. RNA methyltransferase RlmE family.

It is found in the cytoplasm. The enzyme catalyses uridine(2552) in 23S rRNA + S-adenosyl-L-methionine = 2'-O-methyluridine(2552) in 23S rRNA + S-adenosyl-L-homocysteine + H(+). In terms of biological role, specifically methylates the uridine in position 2552 of 23S rRNA at the 2'-O position of the ribose in the fully assembled 50S ribosomal subunit. The protein is Ribosomal RNA large subunit methyltransferase E of Parvibaculum lavamentivorans (strain DS-1 / DSM 13023 / NCIMB 13966).